Here is a 37-residue protein sequence, read N- to C-terminus: GYGCPFNQYQCHSHCKGIRGYKGGYCKGAFKQTCKCY.

Disulfide bonds link Cys4–Cys26, Cys11–Cys34, and Cys15–Cys36.

This sequence belongs to the invertebrate defensin family.

It localises to the secreted. Its function is as follows. Antibacterial peptide mostly active against Gram-positive bacteria (MIC=0.24 ug/ml on Bacillus subtilis, and MIC=0.94 ug/ml on Micrococcus luteus, MIC&gt;120 ug/ml on both Escherichia coli and Pseudomonas aeruginosa). The sequence is that of Tick defensin 2 from Ornithodoros savignyi (African eyed tampan).